The chain runs to 668 residues: Chitin synthase 8 (668 aa).

Positions 1 to 26 (MTSRMPTSGHRTSSSSSERGNMSVQQ) are enriched in polar residues. Positions 1 to 62 (MTSRMPTSGH…PAPLRPGWTL (62 aa)) are disordered. N-linked (GlcNAc...) asparagine glycosylation is found at Asn21, Asn98, and Asn101. 2 helical membrane-spanning segments follow: residues 136–156 (WSLIIGLAGINGALIYIGWKY) and 162–182 (FFLVLLSSNTVLQSFMCICII). Asn216 and Asn476 each carry an N-linked (GlcNAc...) asparagine glycan. 4 consecutive transmembrane segments (helical) span residues 522–542 (WALGSISNEFVMIFRPGIILI), 548–568 (LIAVITWAITPFIIAAFVELL), 583–603 (VFLGLICVLFFRYLYSFCIGF), and 615–635 (YFAGYVMHLFTSPFMNIIILV).

It belongs to the chitin synthase family. Class VIII subfamily.

The protein localises to the cell membrane. It is found in the cell septum. The enzyme catalyses [(1-&gt;4)-N-acetyl-beta-D-glucosaminyl](n) + UDP-N-acetyl-alpha-D-glucosamine = [(1-&gt;4)-N-acetyl-beta-D-glucosaminyl](n+1) + UDP + H(+). Polymerizes chitin, a structural polymer of the cell wall and septum, by transferring the sugar moiety of UDP-GlcNAc to the non-reducing end of the growing chitin polymer. Participated in the development of cell wall and plays a critical role in fungal response to environmental stresses. Necessary for pathogenicity and deoxinivalenol (DON) production. The protein is Chitin synthase 8 of Gibberella zeae (strain ATCC MYA-4620 / CBS 123657 / FGSC 9075 / NRRL 31084 / PH-1) (Wheat head blight fungus).